The sequence spans 143 residues: Hemoglobin subunit alpha (143 aa).

Ser2 is modified (N-acetylserine). Residues 2–143 enclose the Globin domain; the sequence is SLSDKDKSAV…VALALAEKYR (142 aa). His60 provides a ligand contact to O2. His89 lines the heme b pocket.

This sequence belongs to the globin family. Heterotetramer of two alpha chains and two beta chains. Red blood cells.

Involved in oxygen transport from gills to the various peripheral tissues. The protein is Hemoglobin subunit alpha (hba) of Pogonophryne scotti (Saddleback plunderfish).